Here is a 374-residue protein sequence, read N- to C-terminus: Putative F-box protein At5g60060 (374 aa).

The F-box domain maps to 9-61 (SQWSDLPLDILELISDRLDHDSSDTIHLLCLRSVCATWRLSLPLSNKNNRLSK).

This Arabidopsis thaliana (Mouse-ear cress) protein is Putative F-box protein At5g60060.